We begin with the raw amino-acid sequence, 493 residues long: MSLLKMEYNLYAELKKMTCGQPISLFNEDGDFVEVEPGSSFKFLIPKGFYSSPSVKTSLVFETLTTTDNKITSINPINAPKLYPLQRKVVSEVVSNMRKMIELKRPLYITLHLACGFGKTITTCYLMATHGRKTIICVPNKMLIHQWKTLVEAVGLEHKISIDGVSSLLKELKTQSPDVLIVVSRHLTNDAFCKYINKHYDLFILDESHTYNLMNNTAVTRFLAYYPPMMCYFLTATPRPANRIYCNSIINIAKLSDLKKTIYVVDSFFDPYSTDNIRHMIKRLDGPSNKYHIYTEKLLSVDEPRNQLILDTLVEEFKSGTINRILVITKLREHMVMFYKRLLDLFGPEVVFIGDAQNRRTPDMVKSIKELNRFIFVSTLFYSGTGLDIPSLDSLFICSAVINNMQIEQLLGRVCRETELLDRTVYVFPSTSIKEIKYMIGNFVQRIISLSVDKLGFKQESYRKHQESDPTSTCTTSSREERVLNRIFNSQNR.

Positions methionine 100–serine 256 constitute a Helicase ATP-binding domain. An ATP-binding site is contributed by leucine 113–threonine 120. The short motif at aspartate 206–histidine 209 is the DESH box element. One can recognise a Helicase C-terminal domain in the interval isoleucine 309–glycine 456.

The protein belongs to the helicase family. Poxviruses subfamily. In terms of assembly, interacts with G2. Might be part of a transcription complex composed at least of G2, A18, and H5.

It localises to the virion. Its function is as follows. DNA helicase which seems to act as a postreplicative transcription termination factor. Involved in ATP-dependent release of nascent RNA. Forms a stable complex with single-stranded DNA, and to a lesser extent RNA. The polypeptide is Transcript termination protein A18 (Mus musculus (Mouse)).